The chain runs to 226 residues: Transcriptional regulatory protein PcoR (226 aa).

Positions Arg-3–Leu-117 constitute a Response regulatory domain. Asp-52 is subject to 4-aspartylphosphate. A DNA-binding region (ompR/PhoB-type) is located at residues Ala-125–Ile-223.

Post-translationally, phosphorylated by PcoS.

Its subcellular location is the cytoplasm. Its function is as follows. Probable member of a two-component regulatory system PcoS/PcoR. May be involved in the activation of copper resistance gene operon pcoABCD by binding to a specific site on the cop operon promoter (copper box). The chain is Transcriptional regulatory protein PcoR (pcoR) from Escherichia coli.